The sequence spans 89 residues: Small ribosomal subunit protein uS14 (89 aa).

It belongs to the universal ribosomal protein uS14 family. Part of the 30S ribosomal subunit. Contacts proteins S3 and S10.

Functionally, binds 16S rRNA, required for the assembly of 30S particles and may also be responsible for determining the conformation of the 16S rRNA at the A site. This is Small ribosomal subunit protein uS14 from Latilactobacillus sakei subsp. sakei (strain 23K) (Lactobacillus sakei subsp. sakei).